The chain runs to 164 residues: Glycine cleavage system H protein, mitochondrial (164 aa).

A mitochondrion-targeting transit peptide spans 1 to 39; that stretch reads MAWLVLRRLGPVLAPRCPRLSLRPQVPAVRRLGTGSLLL. The 83-residue stretch at 57–139 folds into the Lipoyl-binding domain; it reads IGTVGISNFA…YQDGWLIKMT (83 aa). N6-lipoyllysine is present on Lys-98.

It belongs to the GcvH family. In terms of assembly, the glycine cleavage system is composed of four proteins: P (GLDC), T (GCST), L (DLD) and H (GCSH). Interacts with GLDC. (R)-lipoate serves as cofactor.

Its subcellular location is the mitochondrion. Its function is as follows. The glycine cleavage system catalyzes the degradation of glycine. The H protein (GCSH) shuttles the methylamine group of glycine from the P protein (GLDC) to the T protein (GCST). Has a pivotal role in the lipoylation of enzymes involved in cellular energetics such as the mitochondrial dihydrolipoyllysine-residue acetyltransferase component of pyruvate dehydrogenase complex (DLAT), and the mitochondrial dihydrolipoyllysine-residue succinyltransferase component of 2-oxoglutarate dehydrogenase complex (DLST). The protein is Glycine cleavage system H protein, mitochondrial of Gallus gallus (Chicken).